A 206-amino-acid chain; its full sequence is RNA pyrophosphohydrolase (206 aa).

Residues 6–150 (GYRPNVGIVI…KRDVYRKVMK (145 aa)) enclose the Nudix hydrolase domain. The Nudix box signature appears at 38–59 (GGINEGENIETAMYRELYEEVG). Positions 162 to 191 (KPETVEKPRVERTEKRDFQKRDNQKREFRK) are enriched in basic and acidic residues. Positions 162 to 206 (KPETVEKPRVERTEKRDFQKRDNQKREFRKSARMWNNSHQKGKAQ) are disordered.

It belongs to the Nudix hydrolase family. RppH subfamily. Requires a divalent metal cation as cofactor.

In terms of biological role, accelerates the degradation of transcripts by removing pyrophosphate from the 5'-end of triphosphorylated RNA, leading to a more labile monophosphorylated state that can stimulate subsequent ribonuclease cleavage. The chain is RNA pyrophosphohydrolase from Actinobacillus pleuropneumoniae serotype 7 (strain AP76).